The primary structure comprises 149 residues: Large ribosomal subunit protein bL9 (149 aa).

It belongs to the bacterial ribosomal protein bL9 family.

Functionally, binds to the 23S rRNA. This Glaesserella parasuis serovar 5 (strain SH0165) (Haemophilus parasuis) protein is Large ribosomal subunit protein bL9.